The sequence spans 487 residues: GTPase Der (487 aa).

2 EngA-type G domains span residues 3–167 (LTLA…DEME) and 203–378 (LQVA…EVWN). Residues 9–16 (GRPNVGKS), 56–60 (DTAGL), and 119–122 (NKAE) contribute to the GTP site. Positions 167–190 (EQQAEEQAPETDVDLDPEDEDGEE) are enriched in acidic residues. Positions 167–191 (EQQAEEQAPETDVDLDPEDEDGEEV) are disordered. GTP-binding positions include 209-216 (GRPNAGKS), 256-260 (DTAGM), and 321-324 (NKWD). In terms of domain architecture, KH-like spans 379 to 465 (RRIPTAALNR…RLTLRGQGDK (87 aa)). The tract at residues 458–487 (TLRGQGDKNPYKGRRKKNAGALAKHLKSRG) is disordered. The segment covering 468 to 487 (YKGRRKKNAGALAKHLKSRG) has biased composition (basic residues).

The protein belongs to the TRAFAC class TrmE-Era-EngA-EngB-Septin-like GTPase superfamily. EngA (Der) GTPase family. In terms of assembly, associates with the 50S ribosomal subunit.

GTPase that plays an essential role in the late steps of ribosome biogenesis. This is GTPase Der from Ruegeria pomeroyi (strain ATCC 700808 / DSM 15171 / DSS-3) (Silicibacter pomeroyi).